A 430-amino-acid polypeptide reads, in one-letter code: Elongation factor Tu (430 aa).

One can recognise a tr-type G domain in the interval Arg13–Glu220. The G1 stretch occupies residues Gly22 to Thr29. A GTP-binding site is contributed by Gly22–Thr29. Mg(2+) is bound at residue Thr29. The segment at Gly66 to Ser70 is G2. Residues Asp87–Gly90 are G3. GTP contacts are provided by residues Asp87–His91 and Asn142–Asp145. Residues Asn142–Asp145 form a G4 region. The G5 stretch occupies residues Ser188–Leu190.

It belongs to the TRAFAC class translation factor GTPase superfamily. Classic translation factor GTPase family. EF-Tu/EF-1A subfamily. Monomer.

It localises to the cytoplasm. It carries out the reaction GTP + H2O = GDP + phosphate + H(+). Functionally, GTP hydrolase that promotes the GTP-dependent binding of aminoacyl-tRNA to the A-site of ribosomes during protein biosynthesis. This is Elongation factor Tu from Neorickettsia sennetsu (strain ATCC VR-367 / Miyayama) (Ehrlichia sennetsu).